A 688-amino-acid chain; its full sequence is Nucleolar protein 10 (688 aa).

At M1 the chain carries N-acetylmethionine. S25 is modified (phosphoserine). WD repeat units follow at residues 44–82 (ELIQ…CYDT), 88–124 (KFER…FHSQ), 127–163 (FYYK…RLNL), 170–205 (NPLQ…CWDP), 219–258 (NSVT…LYDL), 262–300 (KPLL…MWNK), and 304–341 (KIFT…IYYI). A coiled-coil region spans residues 423–446 (EYRKDKIRQKIEETRAQRVQLKKL). At S475 the chain carries Phosphoserine. The residue at position 481 (T481) is a Phosphothreonine. S514 is modified (phosphoserine). Coiled-coil stretches lie at residues 514–589 (SEKR…TVLK) and 640–673 (SKQL…LRRS). 2 disordered regions span residues 529 to 557 (LREK…EKAW) and 645 to 688 (FTLK…RSFH). The segment covering 648–663 (KRSEQQKKQQEAEKLH) has biased composition (basic and acidic residues). The span at 664–688 (RQERKRLRRSAGHLKSRHKRGRSFH) shows a compositional bias: basic residues.

It belongs to the WD repeat NOL10/ENP2 family.

Its subcellular location is the nucleus. It localises to the nucleolus. The protein is Nucleolar protein 10 (NOL10) of Homo sapiens (Human).